We begin with the raw amino-acid sequence, 245 residues long: 1-(5-phosphoribosyl)-5-[(5-phosphoribosylamino)methylideneamino] imidazole-4-carboxamide isomerase (245 aa).

Residue Asp7 is the Proton acceptor of the active site. Residue Asp129 is the Proton donor of the active site.

Belongs to the HisA/HisF family.

Its subcellular location is the cytoplasm. It carries out the reaction 1-(5-phospho-beta-D-ribosyl)-5-[(5-phospho-beta-D-ribosylamino)methylideneamino]imidazole-4-carboxamide = 5-[(5-phospho-1-deoxy-D-ribulos-1-ylimino)methylamino]-1-(5-phospho-beta-D-ribosyl)imidazole-4-carboxamide. Its pathway is amino-acid biosynthesis; L-histidine biosynthesis; L-histidine from 5-phospho-alpha-D-ribose 1-diphosphate: step 4/9. This chain is 1-(5-phosphoribosyl)-5-[(5-phosphoribosylamino)methylideneamino] imidazole-4-carboxamide isomerase, found in Shewanella baltica (strain OS223).